The primary structure comprises 68 residues: Adipokinetic prohormone type 1 (68 aa).

Residues Met-1 to Ala-20 form the signal peptide. Gln-21 is subject to Pyrrolidone carboxylic acid. Gly-30 is modified (glycine amide). The propeptide occupies Ser-34–Ser-68.

In terms of tissue distribution, expressed in antennal lobe (AL), corpora cardiaca (CC), corpora allata (CA) and gnathal ganglion (GNG) (at protein level). Expression in CC and CA detected in all animals, expression in GNG in some animals and in AL in few animals (at protein level).

Its subcellular location is the secreted. This hormone, released from cells in the corpora cardiaca, causes release of diglycerides from the fat body and stimulation of muscles to use these diglycerides as an energy source during energy-demanding processes. The protein is Adipokinetic prohormone type 1 of Agrotis ipsilon (Black cutworm moth).